The sequence spans 603 residues: Coiled-coil domain-containing protein 148 (603 aa).

Coiled coils occupy residues 365 to 429 (LAKD…KKKK) and 461 to 510 (EQSL…KQVA).

In Macaca fascicularis (Crab-eating macaque), this protein is Coiled-coil domain-containing protein 148 (CCDC148).